Reading from the N-terminus, the 132-residue chain is ATP synthase epsilon chain 1 (132 aa).

It belongs to the ATPase epsilon chain family. In terms of assembly, F-type ATPases have 2 components, CF(1) - the catalytic core - and CF(0) - the membrane proton channel. CF(1) has five subunits: alpha(3), beta(3), gamma(1), delta(1), epsilon(1). CF(0) has three main subunits: a, b and c.

The protein localises to the cell inner membrane. Functionally, produces ATP from ADP in the presence of a proton gradient across the membrane. This chain is ATP synthase epsilon chain 1, found in Cereibacter sphaeroides (strain ATCC 17023 / DSM 158 / JCM 6121 / CCUG 31486 / LMG 2827 / NBRC 12203 / NCIMB 8253 / ATH 2.4.1.) (Rhodobacter sphaeroides).